A 536-amino-acid chain; its full sequence is MELSSPSREEYPMPRGRVGIMAASLMGLLLLHTVSWVSGARPCSPKSFGYSSVVCVCNGTYCDSLDPLTLPDPGTFSRFESTRSGRRMELSLGTIQANRTGTGLLLTLQPDQKFQKVKGFGGAMTDAAALNILALSPAARNLLLKSYFSEEGIEYNIIRVPMASCDFSIRTYTYDDSPDDFQLLNFSLPEEDVKLKIPLIHQALELANRSVSLFASPWTSPTWLKTNGAVNGKGTLKGQAGDLYHKTWARYFVKFLDAYAEHKLRFWAVTAENEPTAGLLTGYPFQCLGFTPEHQRDFIARDLGPILANSTHRDVRLLMLDDQRLLLPRWAQVVLADPEAAKYVHGIAVHWYLDFLAPAKATLGETHRLFPNTMLFASEACVGSKFWEQSVRLGSWDRGMRYSHSIITNLLYHVVGWTDWNLALNPEGGPNWVRNFVDSPIIVDIAKDTFYKQPMFYHLGHFSKFIPEGSQRVGLVASKKSDLDTVALLRPDGSAVAVVLNRSSKDVPLTIKDPAVGFMETVSPGYSIHTYLWRRQ.

Positions 1–39 are cleaved as a signal peptide; the sequence is MELSSPSREEYPMPRGRVGIMAASLMGLLLLHTVSWVSG. Disulfide bonds link C43-C55 and C57-C62. 4 N-linked (GlcNAc...) asparagine glycosylation sites follow: N58, N98, N185, and N208. E274 (proton donor) is an active-site residue. N309 carries N-linked (GlcNAc...) asparagine glycosylation. Residue E379 is the Nucleophile of the active site. N-linked (GlcNAc...) asparagine glycosylation is present at N501.

Belongs to the glycosyl hydrolase 30 family. In terms of assembly, interacts with saposin-C. Interacts with SCARB2. Interacts with TCP1. Interacts with GRN; this interaction prevents aggregation of GBA1-SCARB2 complex via interaction with HSPA1A upon stress.

It localises to the lysosome membrane. The catalysed reaction is a beta-D-glucosyl-(1&lt;-&gt;1')-N-acylsphing-4-enine + H2O = an N-acylsphing-4-enine + D-glucose. It catalyses the reaction a beta-D-galactosyl-(1&lt;-&gt;1')-N-acylsphing-4-enine + H2O = an N-acylsphing-4-enine + D-galactose. It carries out the reaction cholesteryl 3-beta-D-glucoside + H2O = cholesterol + D-glucose. The enzyme catalyses a beta-D-glucosyl-(1&lt;-&gt;1')-N-acylsphing-4-enine + cholesterol = cholesteryl 3-beta-D-glucoside + an N-acylsphing-4-enine. The catalysed reaction is beta-D-glucosyl-N-(9Z-octadecenoyl)-sphing-4E-enine + cholesterol = N-(9Z-octadecenoyl)-sphing-4-enine + cholesteryl 3-beta-D-glucoside. It catalyses the reaction beta-D-glucosyl-N-octanoylsphing-4E-enine + cholesterol = N-octanoylsphing-4-enine + cholesteryl 3-beta-D-glucoside. It carries out the reaction beta-D-glucosyl-N-dodecanoylsphing-4-enine + cholesterol = N-dodecanoylsphing-4-enine + cholesteryl 3-beta-D-glucoside. The enzyme catalyses beta-D-glucosyl-(1&lt;-&gt;1)-N-octadecanoylsphing-4-enine + cholesterol = N-octadecanoylsphing-4-enine + cholesteryl 3-beta-D-glucoside. The catalysed reaction is beta-D-glucosyl-(1&lt;-&gt;1')-N-(15Z-tetracosenoyl)-sphing-4-enine + cholesterol = N-(15Z-tetracosenoyl)-sphing-4-enine + cholesteryl 3-beta-D-glucoside. It catalyses the reaction a beta-D-galactosyl-(1&lt;-&gt;1')-N-acylsphing-4-enine + cholesterol = cholesteryl 3-beta-D-galactoside + an N-acylsphing-4-enine. It carries out the reaction 1-(beta-D-galactosyl)-N-dodecanoylsphing-4-enine + cholesterol = cholesteryl 3-beta-D-galactoside + N-dodecanoylsphing-4-enine. The enzyme catalyses a beta-D-xylosyl-(1&lt;-&gt;1')-N-acylsphing-4-enine + cholesterol = cholesteryl 3-beta-D-xyloside + an N-acylsphing-4-enine. The catalysed reaction is beta-D-xylosyl-(1&lt;-&gt;1')-N-(9Z-octadecenoyl)-sphing-4-enine + cholesterol = cholesteryl 3-beta-D-xyloside + N-(9Z-octadecenoyl)-sphing-4-enine. The protein operates within steroid metabolism; cholesterol metabolism. It participates in sphingolipid metabolism. In terms of biological role, glucosylceramidase that catalyzes, within the lysosomal compartment, the hydrolysis of glucosylceramides/GlcCers (such as beta-D-glucosyl-(1&lt;-&gt;1')-N-acylsphing-4-enine) into free ceramides (such as N-acylsphing-4-enine) and glucose. Plays a central role in the degradation of complex lipids and the turnover of cellular membranes. Through the production of ceramides, participates in the PKC-activated salvage pathway of ceramide formation. Catalyzes the glucosylation of cholesterol, through a transglucosylation reaction where glucose is transferred from GlcCer to cholesterol. GlcCer containing mono-unsaturated fatty acids (such as beta-D-glucosyl-N-(9Z-octadecenoyl)-sphing-4-enine) are preferred as glucose donors for cholesterol glucosylation when compared with GlcCer containing same chain length of saturated fatty acids (such as beta-D-glucosyl-N-octadecanoyl-sphing-4-enine). Under specific conditions, may alternatively catalyze the reverse reaction, transferring glucose from cholesteryl 3-beta-D-glucoside to ceramide. Can also hydrolyze cholesteryl 3-beta-D-glucoside producing glucose and cholesterol. Catalyzes the hydrolysis of galactosylceramides/GalCers (such as beta-D-galactosyl-(1&lt;-&gt;1')-N-acylsphing-4-enine), as well as the transfer of galactose between GalCers and cholesterol in vitro, but with lower activity than with GlcCers. Contrary to GlcCer and GalCer, xylosylceramide/XylCer (such as beta-D-xyosyl-(1&lt;-&gt;1')-N-acylsphing-4-enine) is not a good substrate for hydrolysis, however it is a good xylose donor for transxylosylation activity to form cholesteryl 3-beta-D-xyloside. The protein is Lysosomal acid glucosylceramidase (GBA1) of Bos taurus (Bovine).